Consider the following 162-residue polypeptide: UPF0305 protein MmarC7_1691 (162 aa).

This sequence belongs to the UPF0305 family.

In Methanococcus maripaludis (strain C7 / ATCC BAA-1331), this protein is UPF0305 protein MmarC7_1691.